A 309-amino-acid polypeptide reads, in one-letter code: Porphobilinogen deaminase (309 aa).

Residue Cys-241 is modified to S-(dipyrrolylmethanemethyl)cysteine.

Belongs to the HMBS family. As to quaternary structure, monomer. Requires dipyrromethane as cofactor.

It carries out the reaction 4 porphobilinogen + H2O = hydroxymethylbilane + 4 NH4(+). The protein operates within porphyrin-containing compound metabolism; protoporphyrin-IX biosynthesis; coproporphyrinogen-III from 5-aminolevulinate: step 2/4. Functionally, tetrapolymerization of the monopyrrole PBG into the hydroxymethylbilane pre-uroporphyrinogen in several discrete steps. In Desulforudis audaxviator (strain MP104C), this protein is Porphobilinogen deaminase.